We begin with the raw amino-acid sequence, 151 residues long: Lectin-like protein BA14k (151 aa).

Residues 1-26 (MNIFKQTCVGAFAVIFGATSIAPTMA) form the signal peptide. The chain crosses the membrane as a helical span at residues 83-103 (GWWYPLAAFGAGAIIGGAVSQ).

This sequence belongs to the BA14k family.

Its subcellular location is the cell membrane. Its function is as follows. Has immunoglobulin-binding and hemagglutination properties, and can bind to mannose. Essential for virulence. May be involved in LPS biosynthesis or polysaccharide transport. This is Lectin-like protein BA14k from Brucella anthropi (strain ATCC 49188 / DSM 6882 / CCUG 24695 / JCM 21032 / LMG 3331 / NBRC 15819 / NCTC 12168 / Alc 37) (Ochrobactrum anthropi).